We begin with the raw amino-acid sequence, 416 residues long: Protein-lysine N-trimethyltransferase SMYD5 (416 aa).

The 331-residue stretch at 21 to 351 (GSVEVRYVDS…PGEEICISYL (331 aa)) folds into the SET domain. The MYND-type zinc finger occupies 98 to 136 (PELCSVRKDLHQNCPHCQVMYCSAECRLAAAEQYHQILC). Tyr350 contacts S-adenosyl-L-methionine. Residues 383-416 (EADDPNVTSEEEEEEDEEEGEPEDAELGDEMTDV) are disordered.

The protein belongs to the class V-like SAM-binding methyltransferase superfamily. Interacts with the N-CoR complex. Interacts with EHMT2 and CBX5. Ubiquitinated and degradaed by the proteasome in response to mild hypothermia (32 degrees Celsius), relieving repression of the SP1 gene.

It localises to the cytoplasm. The catalysed reaction is L-lysyl-[protein] + 3 S-adenosyl-L-methionine = N(6),N(6),N(6)-trimethyl-L-lysyl-[protein] + 3 S-adenosyl-L-homocysteine + 3 H(+). The enzyme catalyses L-lysyl(20)-[histone H4] + 3 S-adenosyl-L-methionine = N(6),N(6),N(6)-trimethyl-L-lysyl(20)-[histone H4] + 3 S-adenosyl-L-homocysteine + 3 H(+). It carries out the reaction L-lysyl(36)-[histone H3] + 3 S-adenosyl-L-methionine = N(6),N(6),N(6)-trimethyl-L-lysyl(36)-[histone H3] + 3 S-adenosyl-L-homocysteine + 3 H(+). Functionally, protein-lysine N-trimethyltransferase that specifically catalyzes trimethylation of 'Lys-22' of the RPL40/eL40 subunit of the 60S ribosome, thereby promoting translation elongation and protein synthesis. May also act as a histone methyltransferase in the context of histone octamers, but not on nucleosome substrates: trimethylates 'Lys-36' of histone H3 and 'Lys-20' of histone H4 to form H3K36me3 and H4K20me3, respectively. The histone methyltransferase activity, which is independent of its SET domain, is however unsure in vivo. In association with the NCoR corepressor complex, involved in the repression of toll-like receptor 4 (TLR4)-target inflammatory genes in macrophages, possibly by catalyzing the formation of H4K20me3 at the gene promoters. Plays an important role in embryonic stem (ES) cell self-renewal and differentiation. Maintains genome stability of ES cells during differentiation through regulation of heterochromatin formation and repression of endogenous repetitive DNA elements by promoting H4K20me3 marks. Acts as a regulator of the hypothermia response: its degradation in response to mild hypothermia relieves the formation of H3K36me3 at gene promoters, allowing expression of the neuroprotective gene SP1. In Mus musculus (Mouse), this protein is Protein-lysine N-trimethyltransferase SMYD5.